Consider the following 322-residue polypeptide: Cytochrome f (322 aa).

The N-terminal stretch at 1-35 (MQTRNTFSWTWIREEITRSISVSLMIYIITWSSIS) is a signal peptide. 4 residues coordinate heme: Y38, C58, C61, and H62. Residues 288 to 308 (VQGLLFFLGSVVLAQIFLVLK) traverse the membrane as a helical segment.

Belongs to the cytochrome f family. The 4 large subunits of the cytochrome b6-f complex are cytochrome b6, subunit IV (17 kDa polypeptide, petD), cytochrome f and the Rieske protein, while the 4 small subunits are PetG, PetL, PetM and PetN. The complex functions as a dimer. Heme is required as a cofactor.

It is found in the plastid. The protein localises to the chloroplast thylakoid membrane. Functionally, component of the cytochrome b6-f complex, which mediates electron transfer between photosystem II (PSII) and photosystem I (PSI), cyclic electron flow around PSI, and state transitions. The protein is Cytochrome f of Aethionema grandiflorum (Persian stone-cress).